The following is a 449-amino-acid chain: Glucose-6-phosphate isomerase (449 aa).

Residue Glu-291 is the Proton donor of the active site. Active-site residues include His-312 and Lys-426.

Belongs to the GPI family.

The protein resides in the cytoplasm. It carries out the reaction alpha-D-glucose 6-phosphate = beta-D-fructose 6-phosphate. It participates in carbohydrate biosynthesis; gluconeogenesis. The protein operates within carbohydrate degradation; glycolysis; D-glyceraldehyde 3-phosphate and glycerone phosphate from D-glucose: step 2/4. Functionally, catalyzes the reversible isomerization of glucose-6-phosphate to fructose-6-phosphate. This is Glucose-6-phosphate isomerase from Streptococcus pneumoniae serotype 19F (strain G54).